The chain runs to 292 residues: uncharacterized protein (292 aa).

An N-terminal signal peptide occupies residues 1-19; sequence MFKKYIFILLLLVTSIVKA. Positions 271–292 are disordered; that stretch reads KRNNPPLKTNNAKSKNPYDQSK.

This is an uncharacterized protein from Rickettsia bellii (strain RML369-C).